A 202-amino-acid chain; its full sequence is Imidazoleglycerol-phosphate dehydratase (202 aa).

The protein belongs to the imidazoleglycerol-phosphate dehydratase family.

The protein localises to the cytoplasm. The catalysed reaction is D-erythro-1-(imidazol-4-yl)glycerol 3-phosphate = 3-(imidazol-4-yl)-2-oxopropyl phosphate + H2O. It functions in the pathway amino-acid biosynthesis; L-histidine biosynthesis; L-histidine from 5-phospho-alpha-D-ribose 1-diphosphate: step 6/9. The sequence is that of Imidazoleglycerol-phosphate dehydratase from Rhizobium meliloti (strain 1021) (Ensifer meliloti).